Consider the following 247-residue polypeptide: 5-oxoprolinase subunit A (247 aa).

It belongs to the LamB/PxpA family. Forms a complex composed of PxpA, PxpB and PxpC.

It carries out the reaction 5-oxo-L-proline + ATP + 2 H2O = L-glutamate + ADP + phosphate + H(+). Its function is as follows. Catalyzes the cleavage of 5-oxoproline to form L-glutamate coupled to the hydrolysis of ATP to ADP and inorganic phosphate. This chain is 5-oxoprolinase subunit A, found in Ralstonia pickettii (strain 12J).